The sequence spans 382 residues: Diphosphomevalonate decarboxylase ERG19 (382 aa).

(R)-5-diphosphomevalonate is bound by residues 22–25 (YWGK), Arg78, 157–162 (SGSACR), and Thr213.

This sequence belongs to the diphosphomevalonate decarboxylase family. Homodimer.

It carries out the reaction (R)-5-diphosphomevalonate + ATP = isopentenyl diphosphate + ADP + phosphate + CO2. It functions in the pathway isoprenoid biosynthesis; isopentenyl diphosphate biosynthesis via mevalonate pathway; isopentenyl diphosphate from (R)-mevalonate: step 3/3. Diphosphomevalonate decarboxylase; part of the second module of ergosterol biosynthesis pathway that includes the middle steps of the pathway. MVD1 converts diphosphomevalonate into isopentenyl diphosphate. The second module is carried out in the vacuole and involves the formation of farnesyl diphosphate, which is also an important intermediate in the biosynthesis of ubiquinone, dolichol, heme and prenylated proteins. Activity by the mevalonate kinase ERG12 (FG05912) first converts mevalonate into 5-phosphomevalonate. 5-phosphomevalonate is then further converted to 5-diphosphomevalonate by the phosphomevalonate kinase ERG8 (FG09764). The diphosphomevalonate decarboxylase ERG19 (FG10424) then produces isopentenyl diphosphate. The isopentenyl-diphosphate delta-isomerase IDI1 (FG09722) then catalyzes the 1,3-allylic rearrangement of the homoallylic substrate isopentenyl (IPP) to its highly electrophilic allylic isomer, dimethylallyl diphosphate (DMAPP). Finally the farnesyl diphosphate synthase ERG20 (FG06784) catalyzes the sequential condensation of isopentenyl pyrophosphate with dimethylallyl pyrophosphate, and then with the resultant geranylpyrophosphate to the ultimate product farnesyl pyrophosphate. The chain is Diphosphomevalonate decarboxylase ERG19 from Gibberella zeae (strain ATCC MYA-4620 / CBS 123657 / FGSC 9075 / NRRL 31084 / PH-1) (Wheat head blight fungus).